Reading from the N-terminus, the 412-residue chain is Branched-chain alpha-ketoacid dehydrogenase kinase (412 aa).

The transit peptide at 1 to 30 (MILASVLRSGPGGGLPLRPLLGPALALRAR) directs the protein to the mitochondrion. Serine 31 is subject to Phosphoserine. Serine 52 bears the Phosphoserine; by autocatalysis mark. A Histidine kinase domain is found at 159–404 (LDDHKDVVTL…DVYLRLRHID (246 aa)). Lysine 192 and lysine 233 each carry N6-acetyllysine. 2 residues coordinate ATP: asparagine 279 and aspartate 315. Asparagine 279 is a Mg(2+) binding site. Residues valine 328, aspartate 330, and phenylalanine 333 each coordinate K(+). Residues threonine 334 and threonine 335 each contribute to the ATP site. Serine 356 and serine 360 each carry phosphoserine. Positions 364, 367, and 370 each coordinate ATP. Position 367 (glycine 367) interacts with K(+).

Belongs to the PDK/BCKDK protein kinase family. As to quaternary structure, homodimer. Homotetramer. Dimerizes through interaction of two opposing nucleotide-binding domains. Interacts with E2 component of the branched-chain alpha-ketoacid dehydrogenase (BCKDH) complex. Competes with BCKDK for binding to the E2 component; this interaction is modulated by branched-chain alpha-keto acids. At steady state, BCKDH holoenzyme contains BCKDK and BCKDHA is phosphorylated. In response to high levels of branched-chain alpha-keto acids, the inhibitory BCKDK is replaced by activating PPM1K leading to BCKDHA dephosphorylation and BCAA degradation. Autophosphorylated. Ubiquitous.

It localises to the mitochondrion matrix. The catalysed reaction is L-seryl-[3-methyl-2-oxobutanoate dehydrogenase] + ATP = O-phospho-L-seryl-[3-methyl-2-oxobutanoate dehydrogenase] + ADP + H(+). It catalyses the reaction L-seryl-[protein] + ATP = O-phospho-L-seryl-[protein] + ADP + H(+). It functions in the pathway protein modification. Its activity is regulated as follows. Allosterically inhibited by certain thiazoles and thiophenes: thiazoles increase interaction with DBT/BCKDH-E2, whereas thiophenes reduce this interaction. Inhibited by 3,6- dichlorobenzo[b]thiophene-2-carboxylic acid (BT2). The ATP binding is mediated by both potassium and magnesium ions. Its function is as follows. Serine/threonine-protein kinase component of macronutrients metabolism. Forms a functional kinase and phosphatase pair with PPM1K, serving as a metabolic regulatory node that coordinates branched-chain amino acids (BCAAs) with glucose and lipid metabolism via two distinct phosphoprotein targets: mitochondrial BCKDHA subunit of the branched-chain alpha-ketoacid dehydrogenase (BCKDH) complex and cytosolic ACLY, a lipogenic enzyme of Krebs cycle. Phosphorylates and inactivates mitochondrial BCKDH complex a multisubunit complex consisting of three multimeric components each involved in different steps of BCAA catabolism: E1 composed of BCKDHA and BCKDHB, E2 core composed of DBT monomers, and E3 composed of DLD monomers. Associates with the E2 component of BCKDH complex and phosphorylates BCKDHA on Ser-337, leading to conformational changes that interrupt substrate channeling between E1 and E2 and inactivates the BCKDH complex. Phosphorylates ACLY on Ser-455 in response to changes in cellular carbohydrate abundance such as occurs during fasting to feeding metabolic transition. Refeeding stimulates MLXIPL/ChREBP transcription factor, leading to increased BCKDK to PPM1K expression ratio, phosphorylation and activation of ACLY that ultimately results in the generation of malonyl-CoA and oxaloacetate immediate substrates of de novo lipogenesis and glucogenesis, respectively. Recognizes phosphosites having SxxE/D canonical motif. This chain is Branched-chain alpha-ketoacid dehydrogenase kinase, found in Homo sapiens (Human).